Reading from the N-terminus, the 126-residue chain is Small ribosomal subunit protein uS11 (126 aa).

It belongs to the universal ribosomal protein uS11 family. In terms of assembly, part of the 30S ribosomal subunit.

In terms of biological role, located on the platform of the 30S subunit. This Methanosarcina mazei (strain ATCC BAA-159 / DSM 3647 / Goe1 / Go1 / JCM 11833 / OCM 88) (Methanosarcina frisia) protein is Small ribosomal subunit protein uS11.